The primary structure comprises 632 residues: MEEGERWREGHVYQRSSETRKPTNYDRPDSPVTHYVSDTHIVGTLMDELEVETGLITTILIATFNEMRRSHKPNELDDNINWWRHEVFYQIYPRSFKDSDGDGIGDLKGITSKLQYFVDTGITAIWLSPIYKSPMVDFGYDISDYRDIQPEYGTLEDFDALIAKANQLGIKVILDFVPNHSSDEHEWFKKSAAREPGYEDFYVWEDGIPGDNETRLPPNNWVSVFSGSAWQWHEERQQFYLRQFTKGQPDLNYRNPAVVQAMDEVLLYWLQKGVAGFRIDAVIYIYEDEQLRDEPLSGSTSDPNSVDYLEHIYTRNLPECYGLIQHWRQLLDNYTADNPGPVRIMMTEGYADLSLLMNYYEDEDGVQGAHFPFNFDFITELNANSAAPDFVYFIQRWLTYMPPGHSANWVMGNHDNPRVASRYGVGTVDAMNMLMMTLPGIGITYYGEELGMVDYRDISWNDTVDQPACDAGLDNYKWVSRDPERTPMQWSDEKNAGFSTGDSTWLPVHPNYQELNLLTQQEATYSHYKVYQSLIKLRQSRVLRDGSFTAQALNRNVFAIKRELRGQPTLLTVINVSNRTQQVDVSNFIDLPNRLTLLVVGVCSQHRVSERLKPAEVKLSPHEGLVIQLKAR.

Positions methionine 1–aspartate 29 are enriched in basic and acidic residues. Residues methionine 1–serine 30 are disordered. N-linked (GlcNAc...) asparagine glycans are attached at residues asparagine 179 and asparagine 212. The Nucleophile role is filled by aspartate 280. Asparagine 333 carries an N-linked (GlcNAc...) asparagine glycan. The Proton donor role is filled by glutamate 348. N-linked (GlcNAc...) asparagine glycans are attached at residues asparagine 461, asparagine 575, and asparagine 578.

Belongs to the glycosyl hydrolase 13 family.

The catalysed reaction is Hydrolysis of terminal, non-reducing (1-&gt;4)-linked alpha-D-glucose residues with release of alpha-D-glucose.. The protein is Maltase 1 (Mal-B1) of Drosophila virilis (Fruit fly).